The sequence spans 445 residues: 8-amino-7-oxononanoate synthase (445 aa).

Substrate is bound at residue Arg40. 131–132 (GY) provides a ligand contact to pyridoxal 5'-phosphate. Position 156 (His156) interacts with substrate. Pyridoxal 5'-phosphate is bound by residues Ser202, His230, and Thr258. N6-(pyridoxal phosphate)lysine is present on Lys261. Residue Thr377 coordinates substrate. Residues 408 to 445 (ASEGQTRRDAEQPPRSLRSLPPEGAAASLGAARRETAA) are disordered.

This sequence belongs to the class-II pyridoxal-phosphate-dependent aminotransferase family. BioF subfamily. Homodimer. Pyridoxal 5'-phosphate serves as cofactor.

The enzyme catalyses 6-carboxyhexanoyl-[ACP] + L-alanine + H(+) = (8S)-8-amino-7-oxononanoate + holo-[ACP] + CO2. Its pathway is cofactor biosynthesis; biotin biosynthesis. In terms of biological role, catalyzes the decarboxylative condensation of pimeloyl-[acyl-carrier protein] and L-alanine to produce 8-amino-7-oxononanoate (AON), [acyl-carrier protein], and carbon dioxide. The sequence is that of 8-amino-7-oxononanoate synthase from Burkholderia ambifaria (strain MC40-6).